The sequence spans 161 residues: ATP synthase subunit b 1 (161 aa).

Residues Leu-3–Leu-23 traverse the membrane as a helical segment.

It belongs to the ATPase B chain family. F-type ATPases have 2 components, F(1) - the catalytic core - and F(0) - the membrane proton channel. F(1) has five subunits: alpha(3), beta(3), gamma(1), delta(1), epsilon(1). F(0) has three main subunits: a(1), b(2) and c(10-14). The alpha and beta chains form an alternating ring which encloses part of the gamma chain. F(1) is attached to F(0) by a central stalk formed by the gamma and epsilon chains, while a peripheral stalk is formed by the delta and b chains.

It localises to the cell inner membrane. Functionally, f(1)F(0) ATP synthase produces ATP from ADP in the presence of a proton or sodium gradient. F-type ATPases consist of two structural domains, F(1) containing the extramembraneous catalytic core and F(0) containing the membrane proton channel, linked together by a central stalk and a peripheral stalk. During catalysis, ATP synthesis in the catalytic domain of F(1) is coupled via a rotary mechanism of the central stalk subunits to proton translocation. Component of the F(0) channel, it forms part of the peripheral stalk, linking F(1) to F(0). The polypeptide is ATP synthase subunit b 1 (Rhizobium meliloti (strain 1021) (Ensifer meliloti)).